The sequence spans 102 residues: Integration host factor subunit alpha (102 aa).

Belongs to the bacterial histone-like protein family. As to quaternary structure, heterodimer of an alpha and a beta chain.

Its function is as follows. This protein is one of the two subunits of integration host factor, a specific DNA-binding protein that functions in genetic recombination as well as in transcriptional and translational control. The sequence is that of Integration host factor subunit alpha from Paracoccus denitrificans (strain Pd 1222).